Here is a 1042-residue protein sequence, read N- to C-terminus: MICASKITMLGLLVMCTLGGVLGKVDIRQTTANKAFMETMRADGYEVVHPFQIRDKNERIGIDTRNYFLKAQEHYSHVTIVIRSNQLGRLKLVLERNNFIFLNQTAFHKLDADGERVIQNRVENCYYQGTVGGEESSFVALSSCNGLRGVISFANGTTFGIWPLDGGDRNSRRHPHILYKSEWSQEAKCGSSMAHAVGQRRMKKHVHKHRSHHHEHNKKRDVSKRTKYVEVALIADYEFMKARGLHDLDAISYMLESLNIADSMLSRDLNIRLSAVYVELWTDVQRIDLWEDIERTLSGVVDYASGHIYHIQKDASILFTAGSFANQEVSNAAIRSICTARSAVIVKGVEQFATHWNGELLAQSIGHLLGLEHDTTACSCEPSPECVMRQQPGRVGGGGGSPFSWQFSKCSVARMHGIWQDGNIQCLLNKPFQVSELRECGNGVVDGSEECDCGSRENCQDPCCDPLTCTLRPHAQCAAHHKCCHRCELRKAGDTCRSSKSPCDVAEQCDGKSGDCPPDGHLIDGTVCGTDGQCWRGNCSDSHQQCQKLWGREARVAEPVCFEQNTKGAEYANCGQRQADGTYHPCQIEDTRCGTLHCHSGSITPIDSSLKAFTFHFTENSHQIQCKSIASAAVGLTSDGTNCASGRVCVAGSCVEMSSVSSATACPTNNLALLCSGHGHCTTTARCVCFNGWSGVACDIRSNSSTYQGSMGFGEEGSGGSSQKSSERKTIMIPHLNIGTTLETATLFAILLGFGVFLLLCLVCLMLCYRRRSVVEIPKPSDEKDEESPDRQIKFGNMPSYREEKRKRKSNKKIYGALNRITEADERDSTSLRSRDSAGGSQQLVDRRNGAPVVVGGIRDPYAGEHIYAESSSNHLTRQFRGINSDGSYPLRSFGSWRSSAPISPASSSGQLTDVSTATTPLRLNKIGKFLKTLQSDDESPSPFSDHQSFTTGIGIGARLEQMQFGGGGDEELSAVEADHDVGSNTESSRGCEEPMDPGSWDSPTLVNGASSSSTSNNYNFRQSPSLFSDPFKLEMTNSMHN.

The first 23 residues, methionine 1–glycine 23, serve as a signal peptide directing secretion. At lysine 24–threonine 746 the chain is on the extracellular side. Asparagine 103 and asparagine 155 each carry an N-linked (GlcNAc...) asparagine glycan. The Peptidase M12B domain maps to lysine 227–proline 431. 4 disulfide bridges follow: cysteine 338–cysteine 426, cysteine 378–cysteine 410, cysteine 380–cysteine 386, and cysteine 496–cysteine 516. The 88-residue stretch at leucine 437–aspartate 524 folds into the Disintegrin domain. Asparagine 538 is a glycosylation site (N-linked (GlcNAc...) asparagine). The EGF-like domain maps to serine 662–aspartate 699. Disulfide bonds link cysteine 666/cysteine 681, cysteine 675/cysteine 687, and cysteine 689/cysteine 698. Asparagine 703 carries N-linked (GlcNAc...) asparagine glycosylation. Residues leucine 747–leucine 767 form a helical membrane-spanning segment. Residues cysteine 768–asparagine 1042 lie on the Cytoplasmic side of the membrane. 3 disordered regions span residues lysine 779–lysine 809, aspartate 825–glycine 850, and histidine 980–phenylalanine 1028. Residues aspartate 825–aspartate 836 are compositionally biased toward basic and acidic residues. Polar residues predominate over residues aspartate 1002–leucine 1027.

The protein resides in the cell membrane. Involved in the migration of sex myoblasts (progenitors of egg-laying muscles), Q neuroblasts and BDU interneurons during development. Involved in axon branching and guidance of neurons including GABAergic type D motor neurons. Promotes sex myoblast migration and positioning independently of gonad attraction cues. May act downstream of mig-13 in order to promote the guidance, migration and positioning of Q neuroblasts and their descendants along the anteroposterior body axis. Required for coordinated movements. The sequence is that of Disintegrin and metalloproteinase domain-containing protein unc-71 from Caenorhabditis elegans.